The primary structure comprises 308 residues: Protein translocase subunit SecF (308 aa).

A run of 6 helical transmembrane segments spans residues 18-38 (AYVF…TRGL), 134-154 (GAIY…LIRF), 160-180 (LGAV…FSLL), 193-213 (TIIA…VVVF), 244-264 (IITS…GGEV), and 272-292 (LIVG…PVVI).

This sequence belongs to the SecD/SecF family. SecF subfamily. Forms a complex with SecD. Part of the essential Sec protein translocation apparatus which comprises SecA, SecYEG and auxiliary proteins SecDF. Other proteins may also be involved.

It is found in the cell inner membrane. In terms of biological role, part of the Sec protein translocase complex. Interacts with the SecYEG preprotein conducting channel. SecDF uses the proton motive force (PMF) to complete protein translocation after the ATP-dependent function of SecA. The polypeptide is Protein translocase subunit SecF (Rhodothermus marinus (strain ATCC 43812 / DSM 4252 / R-10) (Rhodothermus obamensis)).